The primary structure comprises 253 residues: MVSSSATAPRSGFYYFSQGWKLVTQPGIRRFVILPLLVNILLMGGAFWWLFTQLDVWIPSLMSHVPDWLQWLSYLLWPIAVISVLLVFGYFFSTIANWIAAPFNGLLAEQLEARLTGATPPDTGVLGIMKDVPRIMKREWQKFIWYLPRAIVLLILYFIPGVGQTVAPVLWFLFSAWMLAIQYCDYPFDNHKVPFKEMRTALRTQKVANMQFGALTSLFTMIPVLNLVIMPVAVCGATAMWVDCYRSKHALWK.

The next 4 membrane-spanning stretches (helical) occupy residues 31–51 (FVIL…WWLF), 75–95 (LLWP…FSTI), 151–171 (IVLL…PVLW), and 222–242 (IPVL…AMWV).

This sequence belongs to the CysZ family.

Its subcellular location is the cell inner membrane. Its function is as follows. High affinity, high specificity proton-dependent sulfate transporter, which mediates sulfate uptake. Provides the sulfur source for the cysteine synthesis pathway. The polypeptide is Sulfate transporter CysZ (Citrobacter koseri (strain ATCC BAA-895 / CDC 4225-83 / SGSC4696)).